A 443-amino-acid chain; its full sequence is Serine/threonine-protein phosphatase 2A 55 kDa regulatory subunit B beta isoform (443 aa).

WD repeat units lie at residues 22-61 (TEAD…KNQP), 87-128 (EIEE…KRPE), 171-209 (AHTY…RSFN), 220-260 (ELTE…LCDR), 279-317 (EIIS…RPIE), 334-375 (ENDC…DVTL), and 410-443 (DFSK…DKVN).

Belongs to the phosphatase 2A regulatory subunit B family. As to quaternary structure, PP2A consists of a common heterodimeric core enzyme, composed of a 36 kDa catalytic subunit (subunit C) and a 65 kDa constant regulatory subunit (PR65 or subunit A), that associates with a variety of regulatory subunits.

The protein resides in the cytoplasm. The protein localises to the cytoskeleton. Its subcellular location is the membrane. The B regulatory subunit might modulate substrate selectivity and catalytic activity, and might also direct the localization of the catalytic enzyme to a particular subcellular compartment. Negatively controls the initiation of oocyte maturation. This chain is Serine/threonine-protein phosphatase 2A 55 kDa regulatory subunit B beta isoform (ppp2r2b), found in Xenopus tropicalis (Western clawed frog).